The following is a 220-amino-acid chain: N-(5'-phosphoribosyl)anthranilate isomerase (220 aa).

The protein belongs to the TrpF family.

It carries out the reaction N-(5-phospho-beta-D-ribosyl)anthranilate = 1-(2-carboxyphenylamino)-1-deoxy-D-ribulose 5-phosphate. The protein operates within amino-acid biosynthesis; L-tryptophan biosynthesis; L-tryptophan from chorismate: step 3/5. This chain is N-(5'-phosphoribosyl)anthranilate isomerase, found in Xylella fastidiosa (strain M23).